Consider the following 307-residue polypeptide: Pantothenate kinase (307 aa).

Residue 90 to 97 coordinates ATP; sequence GSVAVGKS.

This sequence belongs to the prokaryotic pantothenate kinase family.

It is found in the cytoplasm. It catalyses the reaction (R)-pantothenate + ATP = (R)-4'-phosphopantothenate + ADP + H(+). It participates in cofactor biosynthesis; coenzyme A biosynthesis; CoA from (R)-pantothenate: step 1/5. In Limosilactobacillus reuteri subsp. reuteri (strain JCM 1112) (Lactobacillus reuteri), this protein is Pantothenate kinase.